Here is a 218-residue protein sequence, read N- to C-terminus: UPF0502 protein Shewana3_1622 (218 aa).

The protein belongs to the UPF0502 family.

This chain is UPF0502 protein Shewana3_1622, found in Shewanella sp. (strain ANA-3).